A 1360-amino-acid polypeptide reads, in one-letter code: DNA-directed RNA polymerase subunit beta (1360 aa).

Belongs to the RNA polymerase beta chain family. As to quaternary structure, the RNAP catalytic core consists of 2 alpha, 1 beta, 1 beta' and 1 omega subunit. When a sigma factor is associated with the core the holoenzyme is formed, which can initiate transcription.

It carries out the reaction RNA(n) + a ribonucleoside 5'-triphosphate = RNA(n+1) + diphosphate. Functionally, DNA-dependent RNA polymerase catalyzes the transcription of DNA into RNA using the four ribonucleoside triphosphates as substrates. This Ruthia magnifica subsp. Calyptogena magnifica protein is DNA-directed RNA polymerase subunit beta.